Here is a 402-residue protein sequence, read N- to C-terminus: Palmitoyltransferase PFA4 (402 aa).

The Cytoplasmic portion of the chain corresponds to 1 to 8 (MAVQLKWP). A helical transmembrane segment spans residues 9–29 (IIGVVIPCVLIAMVAYGSHYF). The Lumenal portion of the chain corresponds to 30-39 (VFRTNLSRTE). Residues 40–60 (QILYEVYVCIVWLSYYLAIVV) form a helical membrane-spanning segment. Residues 61 to 125 (DPGSPPKNFT…GHNNLPHFLR (65 aa)) lie on the Cytoplasmic side of the membrane. The region spanning 78 to 128 (RWCKKCQNYKPERSHHCKTCNKCVLKMDHHCPWTYNCVGHNNLPHFLRFVF) is the DHHC domain. Cys108 serves as the catalytic S-palmitoyl cysteine intermediate. Residues 126-146 (FVFFLIVGMTYVLFQLGKQVL) traverse the membrane as a helical segment. Over 147-165 (HYYDSSKLPSYLIDKKEMC) the chain is Lumenal. A helical transmembrane segment spans residues 166–186 (AVIFLLPVTFFVFVSIIILFV). Over 187 to 402 (RCMINLLFRG…LVSKDEISNN (216 aa)) the chain is Cytoplasmic.

The protein belongs to the DHHC palmitoyltransferase family. PFA4 subfamily.

The protein localises to the endoplasmic reticulum membrane. The catalysed reaction is L-cysteinyl-[protein] + hexadecanoyl-CoA = S-hexadecanoyl-L-cysteinyl-[protein] + CoA. Its function is as follows. Mediates the reversible addition of palmitate to target proteins, thereby regulating their membrane association and biological function. The protein is Palmitoyltransferase PFA4 of Debaryomyces hansenii (strain ATCC 36239 / CBS 767 / BCRC 21394 / JCM 1990 / NBRC 0083 / IGC 2968) (Yeast).